A 284-amino-acid polypeptide reads, in one-letter code: MSLNAKNKRSLDYCLQWPDFCQSKKASKLIVKLNKKHPKRRHYKDPEAKHYDVLFKGVCKAVTNGITNQLICDHIDLKIAPGEFVVILGKSGSGKTSLLSLISALDRPTSGVSFVCGRSTICCNDAQLTSLRNKNVGYIFQQYGLLRDLNVDDNIKLAVPFKKRHNNNLEELLERLELKEHRNKKITKLSGGQQQRVAIARALIKEPRILFGDEPTGAVNVDISKKILQFFVEYNRDKGTTIVLVTHNEKIVELAKRVIKIHDGKIVADYLNQRPKTINEINWV.

The ABC transporter domain maps to 53 to 284 (VLFKGVCKAV…PKTINEINWV (232 aa)). 89-96 (GKSGSGKT) is a binding site for ATP.

It belongs to the ABC transporter superfamily.

The sequence is that of Putative ABC transporter ATP-binding protein MG468.1 homolog from Mycoplasma pneumoniae (strain ATCC 29342 / M129 / Subtype 1) (Mycoplasmoides pneumoniae).